Consider the following 293-residue polypeptide: Kynurenine formamidase (293 aa).

Residues 84 to 88 (HGGYW) carry the HGGXW motif. Serine 153 functions as the Nucleophile in the catalytic mechanism. Residues aspartate 236 and histidine 268 contribute to the active site.

It belongs to the kynurenine formamidase family. Homodimer.

It localises to the cytoplasm. Its subcellular location is the cytosol. It is found in the nucleus. It catalyses the reaction N-formyl-L-kynurenine + H2O = L-kynurenine + formate + H(+). It functions in the pathway amino-acid degradation; L-tryptophan degradation via kynurenine pathway; L-kynurenine from L-tryptophan: step 2/2. In terms of biological role, catalyzes the hydrolysis of N-formyl-L-kynurenine to L-kynurenine, the second step in the kynurenine pathway of tryptophan degradation. Kynurenine may be further oxidized to nicotinic acid, NAD(H) and NADP(H). Required for elimination of toxic metabolites. This is Kynurenine formamidase (afmid) from Danio rerio (Zebrafish).